The chain runs to 125 residues: Large ribosomal subunit protein uL30 (125 aa).

The large ribosomal subunit protein uL30 stretch occupies residues 1-61; sequence MSKLKVKLLR…HLVGVAYRID (61 aa). Residues 62–125 are unknown; that stretch reads FSGDIPTVER…KNWKGEEVEL (64 aa).

It belongs to the universal ribosomal protein uL30 family. As to quaternary structure, part of the 50S ribosomal subunit.

The polypeptide is Large ribosomal subunit protein uL30 (Aquifex aeolicus (strain VF5)).